Consider the following 140-residue polypeptide: Methylglyoxal synthase (140 aa).

The MGS-like domain maps to 1–140 (MKIALIAHDK…RGRKGEINGL (140 aa)). Residues H8, K12, 34 to 37 (TGTT), and 54 to 55 (SG) each bind substrate. D60 (proton donor/acceptor) is an active-site residue. Residue H87 participates in substrate binding.

Belongs to the methylglyoxal synthase family.

The enzyme catalyses dihydroxyacetone phosphate = methylglyoxal + phosphate. Functionally, catalyzes the formation of methylglyoxal from dihydroxyacetone phosphate. In Geobacillus sp. (strain WCH70), this protein is Methylglyoxal synthase.